Here is an 883-residue protein sequence, read N- to C-terminus: Valine--tRNA ligase (883 aa).

The 'HIGH' region signature appears at 52 to 62; it reads PNVTGRLHLGH. Residues 529 to 533 carry the 'KMSKS' region motif; sequence KMSKS. Lys-532 contributes to the ATP binding site. The stretch at 813–848 forms a coiled coil; that stretch reads LEGLIDFDKEIKRLENELAKWTKEVERVQKKLSNQG.

This sequence belongs to the class-I aminoacyl-tRNA synthetase family. ValS type 1 subfamily. As to quaternary structure, monomer.

It localises to the cytoplasm. The catalysed reaction is tRNA(Val) + L-valine + ATP = L-valyl-tRNA(Val) + AMP + diphosphate. Catalyzes the attachment of valine to tRNA(Val). As ValRS can inadvertently accommodate and process structurally similar amino acids such as threonine, to avoid such errors, it has a 'posttransfer' editing activity that hydrolyzes mischarged Thr-tRNA(Val) in a tRNA-dependent manner. This is Valine--tRNA ligase from Oceanobacillus iheyensis (strain DSM 14371 / CIP 107618 / JCM 11309 / KCTC 3954 / HTE831).